Here is a 567-residue protein sequence, read N- to C-terminus: Lactase-like protein (567 aa).

Positions 1–21 are cleaved as a signal peptide; that stretch reads MKPVWVATLLWMLLLVPRLGA. Residues 23–541 are Extracellular-facing; that stretch reads RKGSPEEASF…LLSHMQMVTE (519 aa). Residues asparagine 80, asparagine 171, and asparagine 245 are each glycosylated (N-linked (GlcNAc...) asparagine). The chain crosses the membrane as a helical span at residues 542-562; it reads IVVPTVCSLCVLITAVLLMLL. At 563 to 567 the chain is on the cytoplasmic side; sequence LRRQS.

Belongs to the glycosyl hydrolase 1 family. Klotho subfamily. May form dimers.

It localises to the endoplasmic reticulum membrane. Functionally, plays a role in formation of the lens suture in the eye, which is important for normal optical properties of the lens. This is Lactase-like protein (LCTL) from Homo sapiens (Human).